A 777-amino-acid chain; its full sequence is Phosphate transporter PHO1 homolog 10 (777 aa).

One can recognise an SPX domain in the interval 1–322; the sequence is MKFGKIFKKQ…SRNASRNYMK (322 aa). Over 1–372 the chain is Cytoplasmic; it reads MKFGKIFKKQ…RPKVKRERHR (372 aa). Residues 373–393 form a helical membrane-spanning segment; the sequence is VTFFSGFFSGCSIALVIAVVF. Residues 394 to 408 lie on the Extracellular side of the membrane; the sequence is KIESRKIMEKNYGTE. The helical transmembrane segment at 409–429 threads the bilayer; that stretch reads YMANIIPLYSLFGFIILHMLM. Residues 430–459 lie on the Cytoplasmic side of the membrane; sequence YSANIYFWKRYRVNYTFIFGFKQGTELGDR. Residues 460 to 480 form a helical membrane-spanning segment; it reads EVFLVSTGLAVLAFVCFLLNL. The Extracellular portion of the chain corresponds to 481–496; sequence QLDMDWRMKHHKTLPE. A helical membrane pass occupies residues 497–517; it reads VIPLCLATIVLFILFCPFNII. Residues 518–646 are Cytoplasmic-facing; the sequence is YRSSRFFFIR…YELKKGRTWM (129 aa). The 195-residue stretch at 581 to 775 folds into the EXS domain; it reads HSHGVYNAFY…HYYDDDDVDK (195 aa). Residues 647–667 traverse the membrane as a helical segment; the sequence is ILALVSSGVATGMNTFWDIVI. The Extracellular segment spans residues 668–691; sequence DWGLLRKHSKNPYLRDKLLVPHKS. Residues 692–712 traverse the membrane as a helical segment; sequence VYFAAMVVNVILRVAWMQLVL. Over 713–777 the chain is Cytoplasmic; sequence EFNLKSLHKI…YDDDDVDKDD (65 aa).

It belongs to the SYG1 (TC 2.A.94) family. In terms of tissue distribution, expressed in root epidermis and cortex, leaf blades and hydathodes, stems and flowers.

It localises to the cell membrane. Functionally, may transport inorganic phosphate (Pi). This chain is Phosphate transporter PHO1 homolog 10 (PHO1-H10), found in Arabidopsis thaliana (Mouse-ear cress).